Consider the following 253-residue polypeptide: MTNQKKFKRQETQIWQHLQWEPSPQQLEQFNQLQYLLREWNQKINLTRLIEGNDFWISQILDSLWPIQDELKFQDKQINIIDVGTGCGLPGLAVAIALPRSSTTLIDSIYRKTSAVKEIVKELGLLSRVNVLTERIELTGQKKLHRHTFDLAIARAVAKAPVLAEYLIPFLKPTGQAVMYKGKWNDLEKKELLKALSKLKGKIDTTKSLELPERRGIRHAIRISSTMLCPGKYPRSVGIPLKRPLNNQTSDNL.

S-adenosyl-L-methionine is bound by residues G84, L89, 136-137, and R155; that span reads IE.

The protein belongs to the methyltransferase superfamily. RNA methyltransferase RsmG family.

Its subcellular location is the cytoplasm. Its function is as follows. Specifically methylates the N7 position of a guanine in 16S rRNA. This chain is Ribosomal RNA small subunit methyltransferase G, found in Prochlorococcus marinus (strain SARG / CCMP1375 / SS120).